We begin with the raw amino-acid sequence, 118 residues long: Phosphoribosyl-AMP cyclohydrolase (118 aa).

Position 85 (D85) interacts with Mg(2+). Residue C86 participates in Zn(2+) binding. The Mg(2+) site is built by D87 and D89. Zn(2+) contacts are provided by C102 and C109.

The protein belongs to the PRA-CH family. In terms of assembly, homodimer. It depends on Mg(2+) as a cofactor. Requires Zn(2+) as cofactor.

Its subcellular location is the cytoplasm. The enzyme catalyses 1-(5-phospho-beta-D-ribosyl)-5'-AMP + H2O = 1-(5-phospho-beta-D-ribosyl)-5-[(5-phospho-beta-D-ribosylamino)methylideneamino]imidazole-4-carboxamide. Its pathway is amino-acid biosynthesis; L-histidine biosynthesis; L-histidine from 5-phospho-alpha-D-ribose 1-diphosphate: step 3/9. Catalyzes the hydrolysis of the adenine ring of phosphoribosyl-AMP. This chain is Phosphoribosyl-AMP cyclohydrolase, found in Sulfurisphaera tokodaii (strain DSM 16993 / JCM 10545 / NBRC 100140 / 7) (Sulfolobus tokodaii).